The following is a 63-amino-acid chain: DNA gyrase inhibitor YacG (63 aa).

Zn(2+) contacts are provided by cysteine 9, cysteine 12, cysteine 28, and cysteine 32.

This sequence belongs to the DNA gyrase inhibitor YacG family. In terms of assembly, interacts with GyrB. It depends on Zn(2+) as a cofactor.

Inhibits all the catalytic activities of DNA gyrase by preventing its interaction with DNA. Acts by binding directly to the C-terminal domain of GyrB, which probably disrupts DNA binding by the gyrase. The polypeptide is DNA gyrase inhibitor YacG (Salmonella arizonae (strain ATCC BAA-731 / CDC346-86 / RSK2980)).